Here is a 94-residue protein sequence, read N- to C-terminus: MTPIEYIDRALALVVDRLARYPGYEVLLSAEKQLQYIRSVLLDRSLDRSALHRLTLGSIAVKEFDETDPELSRALKDAYYVGIRTGRGLKVDLP.

Functionally, immunity protein that plays a role in preventing early activation of toxin Tse6. In Pseudomonas aeruginosa (strain ATCC 15692 / DSM 22644 / CIP 104116 / JCM 14847 / LMG 12228 / 1C / PRS 101 / PAO1), this protein is Immune protein Tsi6.